Consider the following 349-residue polypeptide: Glycerol-3-phosphate dehydrogenase [NAD(+)], cytoplasmic (349 aa).

10-15 (GSGNWG) lines the NAD(+) pocket. Lys120 is a binding site for substrate. Residue Ala153 coordinates NAD(+). Position 154 is a phosphoserine (Ser154). The active-site Proton acceptor is the Lys204. Arg269 is a binding site for NAD(+). 269–270 (RN) serves as a coordination point for substrate. N6-succinyllysine is present on Lys289. Lys296 and Gln298 together coordinate NAD(+). Phosphotyrosine is present on Tyr326.

This sequence belongs to the NAD-dependent glycerol-3-phosphate dehydrogenase family. As to quaternary structure, homodimer.

The protein resides in the cytoplasm. It catalyses the reaction sn-glycerol 3-phosphate + NAD(+) = dihydroxyacetone phosphate + NADH + H(+). Functionally, has glycerol-3-phosphate dehydrogenase activity. The protein is Glycerol-3-phosphate dehydrogenase [NAD(+)], cytoplasmic (GPD1) of Pongo abelii (Sumatran orangutan).